The following is a 1951-amino-acid chain: [F-actin]-monooxygenase MICAL2 (1951 aa).

The segment at 2 to 494 is monooxygenase domain; it reads GENEDEKQAQ…KHLYITKEMD (493 aa). Residues Cys-97, 116 to 118, 123 to 125, Phe-183, Tyr-298, and Asp-398 each bind FAD; these read EKR and RNN. Residues 516-619 form the Calponin-homology (CH) domain; that stretch reads DIRPNKLLTW…MVMYLSKFYE (104 aa). Position 631 is a phosphoserine (Ser-631). Residues 660–681 carry the Nuclear localization signal motif; that stretch reads RKRTPRVDTQTEENDMNKRRRQ. Disordered stretches follow at residues 663–712 and 891–921; these read TPRV…SQNK and KRVPHAHPPSPPSCLPSPHPAAASSPPAADS. A compositionally biased stretch (low complexity) spans 691–700; the sequence is SFSSRSLGSS. A compositionally biased stretch (pro residues) spans 896 to 909; that stretch reads AHPPSPPSCLPSPH. A compositionally biased stretch (low complexity) spans 910–921; it reads PAAASSPPAADS. The LIM zinc-binding domain occupies 991-1053; it reads DTCYFCKKRV…KPHFVHCKTS (63 aa). Zn(2+)-binding residues include Cys-993, Cys-996, His-1014, Cys-1017, Cys-1020, Cys-1023, Cys-1043, and His-1046. At Thr-1052 the chain carries Phosphoserine. Disordered stretches follow at residues 1054–1141, 1158–1314, 1348–1368, 1383–1427, 1451–1476, 1489–1580, 1594–1624, 1678–1697, 1706–1731, and 1747–1766; these read SKQR…RISP, TSED…VSPT, VEPGRESLRSPEEISSSEGCQ, ILGK…RKLG, HKTGEQLSQESAENIRGGSLKPTCSS, QKKA…AKKA, AQASDLSLPNSILRSRSLPSRPSKMFFSTTP, GDFFNSPKEEGPPGNRVPSL, STSMGQVAHPSSTGQDARKLEGGEGG, and PVTEATSSPTSSSAEEEADS. Basic and acidic residues predominate over residues 1061–1070; sequence AELNQQREEE. Polar residues-rich tracts occupy residues 1129–1138, 1228–1239, and 1246–1256; these read PRPSEWTSVR, HSLQSPTPSKYQ, and QSNSTPMNQRA. Pro residues predominate over residues 1257 to 1268; it reads PSPPKEPPPPPS. The segment covering 1269–1285 has biased composition (low complexity); the sequence is LSSSSSLPSSFSSASVP. A compositionally biased stretch (polar residues) spans 1291–1306; the sequence is DSSSPQVTYNLHSPQI. The segment at 1314–1353 is interaction with MAPK1; sequence TPIYLRRARAQGIVKEIPLYLPHSPMLESTEDCLVEPGRE. Residues 1350-1359 show a composition bias toward basic and acidic residues; the sequence is PGRESLRSPE. Basic and acidic residues predominate over residues 1532 to 1545; sequence EAGKKTSPKPESKT. The segment covering 1599–1616 has biased composition (low complexity); sequence LSLPNSILRSRSLPSRPS. Residues 1678 to 1688 show a composition bias toward basic and acidic residues; sequence GDFFNSPKEEG. Ser-1683 carries the phosphoserine modification. Residues 1706-1720 are compositionally biased toward polar residues; sequence STSMGQVAHPSSTGQ. Residues 1749–1759 are compositionally biased toward low complexity; the sequence is TEATSSPTSSS. The region spanning 1789-1939 is the bMERB domain; sequence KQEELKRLHK…ERTQDQHFEN (151 aa).

Belongs to the Mical family. In terms of assembly, interacts with PLXNA4. Interacts with RAB1B. Interacts with MAPK1/ERK2. Interacts with RAB1B, RAB35, RAB8A, RAB10, RAB13 and RAB15 (in their GTP-bound forms); binding to RAB1B and RAB35 is of low affinity compared to other Rab proteins; binding to RAB1B and RAB35 is of low affinity compared to other Rab proteins; at least in case of RAB8A may bind 2 molecules of RAB8A simultaneously through a high and a low affinity binding site, respectively. FAD is required as a cofactor. Expressed only in testis (at protein level).

Its subcellular location is the cytoplasm. It localises to the nucleus. The enzyme catalyses L-methionyl-[F-actin] + NADPH + O2 + H(+) = L-methionyl-(R)-S-oxide-[F-actin] + NADP(+) + H2O. Its function is as follows. Methionine monooxygenase that promotes depolymerization of F-actin by mediating oxidation of residues 'Met-44' and 'Met-47' on actin to form methionine-sulfoxide, resulting in actin filament disassembly and preventing repolymerization. Regulates the disassembly of branched actin networks also by oxidizing ARP3B-containing ARP2/3 complexes leading to ARP3B dissociation from the network. Acts as a key regulator of the SRF signaling pathway elicited by nerve growth factor and serum: mediates oxidation and subsequent depolymerization of nuclear actin, leading to increase MKL1/MRTF-A presence in the nucleus and promote SRF:MKL1/MRTF-A-dependent gene transcription. Does not activate SRF:MKL1/MRTF-A through RhoA. The polypeptide is [F-actin]-monooxygenase MICAL2 (Mus musculus (Mouse)).